The sequence spans 529 residues: Probable serine/threonine protein phosphatase 2A regulatory subunit B''epsilon (529 aa).

The disordered stretch occupies residues 60 to 110 (KSGTPTNKSKNLPSVFLSSSTPPLSPRSSSGSPRFSRQRTSPPSLHSPLRS). Residues 71–109 (LPSVFLSSSTPPLSPRSSSGSPRFSRQRTSPPSLHSPLR) are compositionally biased toward low complexity. The EF-hand domain occupies 381–416 (SSEPSLEYWFKCVDLDGNGVITSNEMQFFFEEQLHR). Asp-394, Asp-396, Asn-398, and Glu-405 together coordinate Ca(2+). The tract at residues 507 to 529 (EEDVDEVSNGSADVWDEPLEPPF) is disordered. A compositionally biased stretch (acidic residues) spans 520-529 (VWDEPLEPPF).

In terms of assembly, PP2A consists of a common heterodimeric core enzyme, composed of a 36 kDa catalytic subunit (subunit C) and a 65 kDa constant regulatory subunit (PR65 or subunit A), that associates with a variety of regulatory subunits. Proteins that associate with the core dimer include three families of regulatory subunits B (the R2/B/PR55/B55, R3/B''/PR72/PR130/PR59 and R5/B'/B56 families) and cell signaling molecules.

Probable regulatory subunit of type 2A protein phosphatase. This chain is Probable serine/threonine protein phosphatase 2A regulatory subunit B''epsilon (B''EPSILON), found in Arabidopsis thaliana (Mouse-ear cress).